Reading from the N-terminus, the 79-residue chain is Large ribosomal subunit protein bL28 (79 aa).

The protein belongs to the bacterial ribosomal protein bL28 family.

The protein is Large ribosomal subunit protein bL28 of Christiangramia forsetii (strain DSM 17595 / CGMCC 1.15422 / KT0803) (Gramella forsetii).